The chain runs to 392 residues: Isocitrate dehydrogenase [NAD] subunit gamma, mitochondrial (392 aa).

The transit peptide at 1-39 (MALKVATAAGGAVKAALRPALLWRPWEVLGSHEAPRRSF) directs the protein to the mitochondrion. Thr-119 and Asn-132 together coordinate citrate. Substrate contacts are provided by Arg-135, Arg-166, and Asp-253. Asp-253 is a binding site for Mn(2+). Positions 311, 312, and 323 each coordinate ADP.

Belongs to the isocitrate and isopropylmalate dehydrogenases family. In terms of assembly, heterooligomer of subunits alpha (IDH3A), beta (IDH3B), and gamma (IDH3G) in the apparent ratio of 2:1:1. The heterodimer containing one IDH3A and one IDH3B subunit and the heterodimer containing one IDH3A and one IDH3G subunit assemble into a heterotetramer (which contains two subunits of IDH3A, one of IDH3B and one of IDH3G) and further into the heterooctamer. Mg(2+) serves as cofactor. Requires Mn(2+) as cofactor.

It localises to the mitochondrion. With respect to regulation, the heterotetramer and the heterodimer composed of IDH3A and IDH3G subunits can be allosterically activated by citrate (CIT) or/and ADP, and the two activators can act independently or synergistically. The heterodimer composed of IDH3A and IDH3B subunits cannot be allosterically regulated and the allosteric regulation of the heterotetramer is through the IDH3G subunit and not the IDH3B subunit. The IDH3G subunit contains the allosteric site which consists of a CIT-binding site and an ADP-binding site, and the binding of CIT and ADP causes conformational changes at the allosteric site which are transmitted to the active site in the catalytic subunit (IDH3A) through a cascade of conformational changes at the heterodimer interface, leading to stabilization of the isocitrate-binding at the active site and thus activation of the enzyme. ATP can activate the heterotetramer and the heterodimer composed of IDH3A and IDH3G subunits at low concentrations but inhibits their activities at high concentrations, whereas ATP exhibits only inhibitory effect on the heterodimer composed of IDH3A and IDH3B subunits. Regulatory subunit which plays a role in the allosteric regulation of the enzyme catalyzing the decarboxylation of isocitrate (ICT) into alpha-ketoglutarate. The heterodimer composed of the alpha (IDH3A) and beta (IDH3B) subunits and the heterodimer composed of the alpha (IDH3A) and gamma (IDH3G) subunits, have considerable basal activity but the full activity of the heterotetramer (containing two subunits of IDH3A, one of IDH3B and one of IDH3G) requires the assembly and cooperative function of both heterodimers. The sequence is that of Isocitrate dehydrogenase [NAD] subunit gamma, mitochondrial (IDH3G) from Bos taurus (Bovine).